The sequence spans 74 residues: Translation initiation factor IF-1 (74 aa).

Positions 1 to 72 (MGKEDVIRME…TRGRIVYRKK (72 aa)) constitute an S1-like domain.

Belongs to the IF-1 family. Component of the 30S ribosomal translation pre-initiation complex which assembles on the 30S ribosome in the order IF-2 and IF-3, IF-1 and N-formylmethionyl-tRNA(fMet); mRNA recruitment can occur at any time during PIC assembly.

It is found in the cytoplasm. In terms of biological role, one of the essential components for the initiation of protein synthesis. Stabilizes the binding of IF-2 and IF-3 on the 30S subunit to which N-formylmethionyl-tRNA(fMet) subsequently binds. Helps modulate mRNA selection, yielding the 30S pre-initiation complex (PIC). Upon addition of the 50S ribosomal subunit IF-1, IF-2 and IF-3 are released leaving the mature 70S translation initiation complex. The sequence is that of Translation initiation factor IF-1 from Thermotoga petrophila (strain ATCC BAA-488 / DSM 13995 / JCM 10881 / RKU-1).